The primary structure comprises 182 residues: Oligoribonuclease (182 aa).

Positions 8-171 constitute an Exonuclease domain; that stretch reads LIWLDMEMTG…ADIHESIGEL (164 aa). Tyr-129 is an active-site residue.

The protein belongs to the oligoribonuclease family.

It is found in the cytoplasm. In terms of biological role, 3'-to-5' exoribonuclease specific for small oligoribonucleotides. The chain is Oligoribonuclease from Azoarcus sp. (strain BH72).